The following is a 233-amino-acid chain: uncharacterized protein (233 aa).

This is an uncharacterized protein from Methanocaldococcus jannaschii (strain ATCC 43067 / DSM 2661 / JAL-1 / JCM 10045 / NBRC 100440) (Methanococcus jannaschii).